We begin with the raw amino-acid sequence, 826 residues long: Prominin-1-A (826 aa).

3 consecutive transmembrane segments (helical) span residues 50–70 (YYEP…LFVV), 106–126 (VVCA…GLLF), and 153–173 (LLTT…LCAY). 6 N-linked (GlcNAc...) asparagine glycosylation sites follow: Asn-178, Asn-268, Asn-286, Asn-327, Asn-388, and Asn-404. A run of 2 helical transmembrane segments spans residues 439–459 (CMIV…ILGF) and 483–503 (VGFS…LFLA). 4 N-linked (GlcNAc...) asparagine glycosylation sites follow: Asn-576, Asn-582, Asn-617, and Asn-693.

It belongs to the prominin family.

The protein resides in the apical cell membrane. It is found in the cell projection. Its subcellular location is the microvillus membrane. It localises to the endoplasmic reticulum. The protein localises to the endoplasmic reticulum-Golgi intermediate compartment. May play a role in cell differentiation, proliferation and apoptosis. Binds cholesterol in cholesterol-containing plasma membrane microdomains and may play a role in the organization of the apical plasma membrane in epithelial cells. Involved in regulation of MAPK and Akt signaling pathways. The sequence is that of Prominin-1-A (prom1a) from Danio rerio (Zebrafish).